The following is a 468-amino-acid chain: Cell division protein FtsA (468 aa).

Positions 416–468 (NKKDTHENEVESSDEEIYQSEDNHQEHKQNHEHVQDKDKEESKFKKLMKSLFE) are disordered. Residues 425–434 (VESSDEEIYQ) show a composition bias toward acidic residues. Residues 436–459 (EDNHQEHKQNHEHVQDKDKEESKF) show a composition bias toward basic and acidic residues.

Belongs to the FtsA/MreB family. As to quaternary structure, self-interacts. Interacts with FtsZ.

It is found in the cell membrane. Its function is as follows. Cell division protein that is involved in the assembly of the Z ring. May serve as a membrane anchor for the Z ring. The chain is Cell division protein FtsA from Staphylococcus aureus (strain MRSA252).